Reading from the N-terminus, the 1219-residue chain is Pheromone-regulated membrane protein 10 (1219 aa).

The span at 1–11 shows a compositional bias: basic and acidic residues; it reads MMRTQSDEHVA. Disordered stretches follow at residues 1–273, 303–490, 503–533, and 555–713; these read MMRT…IERE, LASF…DPFT, HDDD…EDYV, and EGNK…RPVK. A compositionally biased stretch (acidic residues) spans 42–53; that stretch reads DENDDGHDDSDE. Over residues 57-68 the composition is skewed to low complexity; sequence SVVIPTPSVVIV. The span at 104-115 shows a compositional bias: polar residues; it reads LKSPGTPTTYSP. The segment covering 136–155 has biased composition (low complexity); it reads GSSLSSTTLMNTLLNSSGLG. Acidic residues-rich tracts occupy residues 159–171 and 219–231; these read TESE…DEEV and QEEE…DDDG. 3 stretches are compositionally biased toward basic and acidic residues: residues 259 to 273, 330 to 346, and 395 to 421; these read ADRA…IERE, DDQR…RREN, and LDRR…EKER. Basic residues predominate over residues 422–432; that stretch reads QHHHHNHHHHH. A compositionally biased stretch (polar residues) spans 435–446; sequence ETGPNTGASSPF. The segment covering 448-470 has biased composition (basic and acidic residues); that stretch reads EEEKDREAEEAEILRDQARDLVN. The segment covering 565–577 has biased composition (low complexity); it reads TTVGDGTSTGDVS. Residues 598–615 are compositionally biased toward basic residues; it reads KSKTKTTQKLGLKKKKKE. Residues 616-641 show a composition bias toward basic and acidic residues; the sequence is LLKIIEDQRKEKEENKKRPKWYDKSR. The segment covering 642–652 has biased composition (low complexity); sequence STSPSPGGTPA. Residues 653–673 are compositionally biased toward basic residues; it reads PHHHHHIPGLHLHHHTKGHQR. Residues 693-713 show a composition bias toward basic and acidic residues; sequence GGDKPPDRPRSLRSEALRPVK. A run of 10 helical transmembrane segments spans residues 864 to 884, 888 to 908, 918 to 938, 945 to 965, 983 to 1003, 1021 to 1041, 1049 to 1069, 1075 to 1095, 1100 to 1120, and 1184 to 1204; these read PPWL…PYAF, WADI…QIIV, VFEV…GTIS, FCFA…YIVL, MFYA…GAVV, LDPL…ALVN, PSML…GANI, SSYL…NLYS, GLAF…GVAS, and LGFT…AATL.

This sequence belongs to the ThrE exporter (TC 2.A.79) family.

Its subcellular location is the membrane. The chain is Pheromone-regulated membrane protein 10 from Yarrowia lipolytica (strain CLIB 122 / E 150) (Yeast).